A 1207-amino-acid chain; its full sequence is MVDVNKFESMRIGIASPQKIRYWSFGEVKKPETINYRTQKPEREGLFDERIFGPQKDWECACGKLKGVFYKNQVCELCGVQVTTAKSRRERMGHIELAAPISHIWYFKGIPSRMGLALDMSPRALEEVIYFASYVVIDPKETDLEKKQLLTEREYREQLLKNGFGSFVAKMGAEAIQDLLNDVDIDKEVAELKEELKTVTGQRRVKIIRRLDVLSAFRKSGNALSWMVLNVLPVIPPDLRPMVQLDGGRFATSDLNDLYRRVINRNNRLKRLMELNAPNIIVQNEKRMLQEAVDTLIDNGRRGRPITGAGNRPLKSLSHMLKGKQGRFRQNLLGKRVDYSGRSVIAVGPTLKMYQCGVPREMAIELFKPFVMAQLVKKELAANIRAAKRKVERQDSDVWDVLETVVKEHPVLLNRAPTLHRLGIQAFEPVLIDGKAIRLHPLACEAYNADFDGDQMAIHLPLSEEAQAEARLLMLAAEHILNPKDGKPVVTPSQDMVLGNYYLTMEEKGREGEGMIFATPEEVEIAMRNGYVHLHTRIGIATKSLNKPWTENQQDKILVTTVGKVIFNSIIPEGMPYLNEPTDVNLTTSTDDRFFMDAGQNIKEVLAGIDTVRPFKKGYLGNIIAEVFKRYRTTATSEYLDRLKDLGYYQSTLAGLTVGIADIPVVEDKHEIIDAAHKRVEQITKQFRRGLITDDERYNAVTGVWRDAKESLEKRLIEEQDLTNPIVMMMDSGARGNISNFSQLAGMRGLMAAPNGKIMELPIISNFREGLSVLEMFFSTHGARKGMTDTALKTADSGYLTRRLVDVAQDVIIREDDCGTDRGLVIADIATGKEMVEPLFERLVGRYTRKSVLHPETGEMIIGDDTLISEDIARKIIEAGVKEVTIRSVFTCKTPHGVCKHCYGINLATGDAVEVGEAVGTIAAQSIGEPGTQLTMRTFHTGGVASSSDITQGLPRVQEIFEARNPKGEAIITEVTGTVESIVEDGATRTREITVKGKTDTRSYTVGMADVLMVEEGEFIHRGAPLIQGSIEPKHLLQVRDALSVETYLLGEVQKTYRSQGVEIGDKHIEVMVRQMLRKVRIMDNGSIDVLPGTLMDISDFEALNETALLNGEMPATGRPVLMGITKASLETNSFLSAASFQETTRVLTDAAIRGKEDHLLGLKENVIIGKIIPAGTGMFRYRNIEPLADLTNAPEVKEVETETVEN.

Residues cysteine 60, cysteine 62, cysteine 75, and cysteine 78 each coordinate Zn(2+). Residues aspartate 450, aspartate 452, and aspartate 454 each contribute to the Mg(2+) site. The Zn(2+) site is built by cysteine 818, cysteine 892, cysteine 899, and cysteine 902.

It belongs to the RNA polymerase beta' chain family. The RNAP catalytic core consists of 2 alpha, 1 beta, 1 beta' and 1 omega subunit. When a sigma factor is associated with the core the holoenzyme is formed, which can initiate transcription. It depends on Mg(2+) as a cofactor. Zn(2+) is required as a cofactor.

It catalyses the reaction RNA(n) + a ribonucleoside 5'-triphosphate = RNA(n+1) + diphosphate. Its function is as follows. DNA-dependent RNA polymerase catalyzes the transcription of DNA into RNA using the four ribonucleoside triphosphates as substrates. This Lactococcus lactis subsp. cremoris (strain SK11) protein is DNA-directed RNA polymerase subunit beta'.